The sequence spans 186 residues: Adenylyl-sulfate kinase (186 aa).

Residue 17 to 24 (GLSGAGKT) coordinates ATP. The active-site Phosphoserine intermediate is the Ser-91.

It belongs to the APS kinase family.

It carries out the reaction adenosine 5'-phosphosulfate + ATP = 3'-phosphoadenylyl sulfate + ADP + H(+). It functions in the pathway sulfur metabolism; hydrogen sulfide biosynthesis; sulfite from sulfate: step 2/3. Catalyzes the synthesis of activated sulfate. The protein is Adenylyl-sulfate kinase of Chloroflexus aurantiacus (strain ATCC 29364 / DSM 637 / Y-400-fl).